We begin with the raw amino-acid sequence, 512 residues long: Cytochrome P450 98A1 (512 aa).

Residues 3 to 23 (ASLLLSVALAVVLIPLSLALL) form a helical membrane-spanning segment. C441 contributes to the heme binding site.

This sequence belongs to the cytochrome P450 family. Heme is required as a cofactor.

It localises to the membrane. This Sorghum bicolor (Sorghum) protein is Cytochrome P450 98A1 (CYP98A1).